Consider the following 298-residue polypeptide: MLTFQQIIFKLQTFWADKGCTVIQSFDMEVGAGTSHPATCLRALGPEPWFAAYVQPSRRPKDGRYGDNPNRLQHYYQFQVALKPAPANIQDLYLDSLRELGIDPKVHDIRFVEDDWENPTLGAWGLGWEVWLNGMEVTQFTYFQQVGGIDCTPVLGEITYGIERLAMYLQGVENVYDLVWAKTLDGNTVTYGDVYHQNEVEQSTYNFEYSDADWLLRQFNDYEAQAKRLLAVEEASLALPAYELVLKAGHTFNLLDARGAISVTERATYIGRIRALSRAVAQKYVESREKLGFPLIKK.

This sequence belongs to the class-II aminoacyl-tRNA synthetase family. In terms of assembly, tetramer of two alpha and two beta subunits.

It localises to the cytoplasm. The catalysed reaction is tRNA(Gly) + glycine + ATP = glycyl-tRNA(Gly) + AMP + diphosphate. In Neisseria meningitidis serogroup C / serotype 2a (strain ATCC 700532 / DSM 15464 / FAM18), this protein is Glycine--tRNA ligase alpha subunit.